Consider the following 272-residue polypeptide: Cell shape-determining protein MreC (272 aa).

Topologically, residues 1-8 (MNRFKKSK) are cytoplasmic. A helical transmembrane segment spans residues 9-29 (YVIIVFVTVLLVSALLATTYS). The Extracellular portion of the chain corresponds to 30 to 272 (STIVTKLGDG…VDVIELVGNS (243 aa)). The stretch at 64–112 (LTRTYNENESLKKQLYQLEVKSNEVESLKTENEQLRQLLDMKSKLQATK) forms a coiled coil.

It belongs to the MreC family. As to quaternary structure, homodimer. Interacts with a number of proteins in the elongasome, including PBP1a (pbpA), PBP1b, PBP2a, PBP2b (penA), StkP, MltG, MreD and RodZ.

The protein localises to the cell membrane. Functionally, involved in formation and maintenance of cell shape, probably part of the elongasome which synthesizes peripheral peptidoglycan (PG). This Streptococcus pneumoniae (strain ATCC BAA-255 / R6) protein is Cell shape-determining protein MreC.